The sequence spans 577 residues: Cryptochrome DASH, chloroplastic/mitochondrial (577 aa).

A chloroplast and mitochondrion-targeting transit peptide spans 1–53; it reads MIKQPFLLTKFTPFSSKSKHTLFTFHCNFSIKMASLTARTTPTVQNVPGLTPE. The 142-residue stretch at 78–219 folds into the Photolyase/cryptochrome alpha/beta domain; sequence GVAIVWFRND…GNDPGSGNTT (142 aa). The interval 550-577 is disordered; that stretch reads TKKTGDSKTAFSSRRGRPEDNRRKRHGY.

The protein belongs to the DNA photolyase class-1 family. Requires FAD as cofactor. (6R)-5,10-methylene-5,6,7,8-tetrahydrofolate serves as cofactor. In terms of tissue distribution, expressed in the endosperm and embryo 96 hours after seed imbibition. In the embryo, detected in the root meristem, the root cap, the shoot apical meristem and the epidermis of cotyledons. In adult plants, detcted in roots, the whole leaf lamina, the stem and in glandular trichomes.

Its subcellular location is the plastid. The protein resides in the chloroplast. The protein localises to the mitochondrion. Functionally, may have a photoreceptor function and might bind ss- and ds-DNA in a sequence non-specific manner. Lacks photolyase activity. Has a potential role in detecting the dawn and dusk transitions and, consequently, in circadian input pathways. This Solanum lycopersicum (Tomato) protein is Cryptochrome DASH, chloroplastic/mitochondrial.